The following is a 288-amino-acid chain: Lipoyl synthase (288 aa).

[4Fe-4S] cluster contacts are provided by cysteine 39, cysteine 44, cysteine 50, cysteine 65, cysteine 69, cysteine 72, and serine 276. Positions 51–265 (WGKGTATFMI…KETGLKKGFE (215 aa)) constitute a Radical SAM core domain.

The protein belongs to the radical SAM superfamily. Lipoyl synthase family. It depends on [4Fe-4S] cluster as a cofactor.

It is found in the cytoplasm. It catalyses the reaction [[Fe-S] cluster scaffold protein carrying a second [4Fe-4S](2+) cluster] + N(6)-octanoyl-L-lysyl-[protein] + 2 oxidized [2Fe-2S]-[ferredoxin] + 2 S-adenosyl-L-methionine + 4 H(+) = [[Fe-S] cluster scaffold protein] + N(6)-[(R)-dihydrolipoyl]-L-lysyl-[protein] + 4 Fe(3+) + 2 hydrogen sulfide + 2 5'-deoxyadenosine + 2 L-methionine + 2 reduced [2Fe-2S]-[ferredoxin]. It functions in the pathway protein modification; protein lipoylation via endogenous pathway; protein N(6)-(lipoyl)lysine from octanoyl-[acyl-carrier-protein]: step 2/2. Functionally, catalyzes the radical-mediated insertion of two sulfur atoms into the C-6 and C-8 positions of the octanoyl moiety bound to the lipoyl domains of lipoate-dependent enzymes, thereby converting the octanoylated domains into lipoylated derivatives. The protein is Lipoyl synthase of Bacteroides fragilis (strain YCH46).